The following is a 471-amino-acid chain: Membrane-associated sulfotransferase kil1 (471 aa).

Residues 1–12 are Cytoplasmic-facing; that stretch reads MSTTSMILTKKN. Residues 13–33 form a helical; Signal-anchor for type II membrane protein membrane-spanning segment; it reads IIILSIIIITIIAYQFYITSP. The Lumenal segment spans residues 34-471; that stretch reads QSFPSSNTIT…LLNRDFKWQN (438 aa). N47 carries N-linked (GlcNAc...) asparagine glycosylation. Composition is skewed to low complexity over residues 89-105 and 112-127; these read NQNE…NNNK and NNNN…NNNN. The segment at 89 to 127 is disordered; it reads NQNENQNQINNEYNNNKLNDEQENNNNNNYNNNNNNNNN. Residues 167–172, R252, and S260 each bind 3'-phosphoadenylyl sulfate; that span reads KSGTTF. Residues N324 and N344 are each glycosylated (N-linked (GlcNAc...) asparagine). Position 348 (Y348) interacts with 3'-phosphoadenylyl sulfate.

This sequence belongs to the sulfotransferase 1 family.

The protein localises to the membrane. Functionally, sulfotransferase involved in intracellular killing of bacteria. In Dictyostelium discoideum (Social amoeba), this protein is Membrane-associated sulfotransferase kil1 (kil1).